The sequence spans 513 residues: Protein phosphatase 1H (513 aa).

Position 7 is a phosphoserine (Ser7). The PPM-type phosphatase domain occupies 77-506; it reads ATGYAEVINA…DDISVYVIPL (430 aa). Residues 109–133 are disordered; the sequence is TITSTPNRNSKRRSSLPNGEGLQLK. Thr113 bears the Phosphothreonine mark. Ser123 and Ser210 each carry phosphoserine. Arg212 is modified (omega-N-methylarginine). Ser220 carries the post-translational modification Phosphoserine. Thr223 carries the phosphothreonine modification. Position 421 is a phosphoserine (Ser421).

The protein belongs to the PP2C family.

It is found in the nucleus. It localises to the cytoplasm. It carries out the reaction O-phospho-L-seryl-[protein] + H2O = L-seryl-[protein] + phosphate. The enzyme catalyses O-phospho-L-threonyl-[protein] + H2O = L-threonyl-[protein] + phosphate. Functionally, dephosphorylates CDKN1B at 'Thr-187', thus removing a signal for proteasomal degradation. In Mus musculus (Mouse), this protein is Protein phosphatase 1H (Ppm1h).